The sequence spans 213 residues: Charged multivesicular body protein 2b (213 aa).

Position 2 is an N-acetylalanine (A2). Residues 25-55 (QRAIIRDRAALEKQEKQLELEIKKMAKIGNK) are a coiled coil. The span at 179–194 (AKAPSAARSLPSASTS) shows a compositional bias: low complexity. Positions 179–199 (AKAPSAARSLPSASTSKATIS) are disordered. A Phosphoserine modification is found at S199. The MIT-interacting motif motif lies at 201 to 211 (EEIERQLKALG).

Belongs to the SNF7 family. Probable core component of the endosomal sorting required for transport complex III (ESCRT-III). ESCRT-III components are thought to multimerize to form a flat lattice on the perimeter membrane of the endosome. Several assembly forms of ESCRT-III may exist that interact and act sequentially. Interacts with CHMP2A. Interacts with VPS4A. Interacts with VPS4B; the interaction is direct. Widely expressed. Expressed in brain, heart, skeletal muscle, spleen, kidney, liver, small intestine, pancreas, lung, placenta and leukocytes. In brain, it is expressed in cerebellum, cerebral cortex, medulla, spinal cord, occipital lobe, frontal lobe, temporal lobe and putamen.

It is found in the cytoplasm. It localises to the cytosol. Its subcellular location is the late endosome membrane. Functionally, probable core component of the endosomal sorting required for transport complex III (ESCRT-III) which is involved in multivesicular bodies (MVBs) formation and sorting of endosomal cargo proteins into MVBs. MVBs contain intraluminal vesicles (ILVs) that are generated by invagination and scission from the limiting membrane of the endosome and mostly are delivered to lysosomes enabling degradation of membrane proteins, such as stimulated growth factor receptors, lysosomal enzymes and lipids. The MVB pathway appears to require the sequential function of ESCRT-O, -I,-II and -III complexes. ESCRT-III proteins mostly dissociate from the invaginating membrane before the ILV is released. The ESCRT machinery also functions in topologically equivalent membrane fission events, such as the terminal stages of cytokinesis and the budding of enveloped viruses (HIV-1 and other lentiviruses). ESCRT-III proteins are believed to mediate the necessary vesicle extrusion and/or membrane fission activities, possibly in conjunction with the AAA ATPase VPS4. This Homo sapiens (Human) protein is Charged multivesicular body protein 2b (CHMP2B).